Reading from the N-terminus, the 98-residue chain is MACCAPRCCSVRTGPATTICSSDQFCRCGVCLPSTCPHDISLLQPTFCDNSPVPYHVPDTYVPTCFLLNSSHPTPGLSGINLTTFIQPGCENACEPRC.

An N-acetylalanine modification is found at alanine 2. Repeat copies occupy residues 3–7, 8–12, 47–51, and 55–59. Residues 3-59 are 4 X 5 AA repeats of C-C-X(3); it reads CCAPRCCSVRTGPATTICSSDQFCRCGVCLPSTCPHDISLLQPTFCDNSPVPYHVPD.

It belongs to the KRTAP type 3 family. Interacts with wool keratins. In terms of tissue distribution, wool.

In terms of biological role, in the wool cortex, wool keratin intermediate filaments are embedded in an interfilamentous matrix, consisting of hair keratin-associated proteins (KRTAP), which are essential for the formation of a rigid and resistant wool shaft through their extensive disulfide bond cross-linking with abundant cysteine residues of wool keratins. The matrix proteins include the high-sulfur and high-glycine-tyrosine keratins. In Capra hircus (Goat), this protein is Keratin-associated protein 3-1 (KRTAP3-1).